A 520-amino-acid chain; its full sequence is Ribonuclease Y (520 aa).

A helical membrane pass occupies residues 4-24 (TVWILISILLATVGAVVGFFV). Residues 210 to 273 (TVSVVNLPND…ETARIALDKL (64 aa)) enclose the KH domain. The HD domain maps to 336–429 (VLKHSMEVAY…VAAADALSAA (94 aa)).

Belongs to the RNase Y family.

The protein localises to the cell membrane. Functionally, endoribonuclease that initiates mRNA decay. In Bacillus cereus (strain ZK / E33L), this protein is Ribonuclease Y.